The following is a 457-amino-acid chain: Toxin and drug export protein A (457 aa).

The N-terminal stretch at 1–23 (MFTIKKLTLTIVVATTLTGCANI) is a signal peptide.

This sequence belongs to the outer membrane factor (OMF) (TC 1.B.17) family. As to quaternary structure, homotrimer. Probably part of a complex composed of LtxB, LtxD and TdeA, which forms a single transport channel across the two membranes.

It localises to the cell outer membrane. Required for secretion of the LtxA leukotoxin and resistance to various antimicrobial compounds. This Aggregatibacter actinomycetemcomitans (Actinobacillus actinomycetemcomitans) protein is Toxin and drug export protein A.